The sequence spans 421 residues: Core-capsid bridging protein (421 aa).

Belongs to the adenoviridae core-capsid bridging protein family. As to quaternary structure, monomer. Homodimer. Exists in equilibrium between monomers and dimers in solution. Interacts with the histone-like nucleoprotein; this interactions bridge the virus core to the capsid. Interacts with core protein X; this interactions bridge the virus core to the capsid. Interacts with the endosome lysis protein VI; this interactions bridge the virus core to the capsid. Interacts with the peripentonal hexons. Interacts with host NPM1; this interaction might play a role in virus assembly.

The protein localises to the virion. It localises to the host nucleus. Its subcellular location is the host nucleolus. Associates loosely with the viral DNA to form an outer shell around the nucleoprotein-DNA complex and links it with the capsid by binding the endosome lysis protein. Dissociates from the viral genome during entry. Might be involved in nuclear capsid assembly of the viral particles through its association with NPM1/nucleophosmin. This Canine adenovirus serotype 1 (strain RI261) (CAdV-1) protein is Core-capsid bridging protein.